Consider the following 318-residue polypeptide: Replication factor C small subunit (318 aa).

43–50 (GPAGTGKT) contributes to the ATP binding site.

This sequence belongs to the activator 1 small subunits family. RfcS subfamily. In terms of assembly, heteromultimer composed of small subunits (RfcS) and large subunits (RfcL).

Functionally, part of the RFC clamp loader complex which loads the PCNA sliding clamp onto DNA. This chain is Replication factor C small subunit, found in Picrophilus torridus (strain ATCC 700027 / DSM 9790 / JCM 10055 / NBRC 100828 / KAW 2/3).